A 117-amino-acid polypeptide reads, in one-letter code: Immunoglobulin lambda variable 1-51 (117 aa).

The N-terminal stretch at 1-19 (MTCSPLLLTLLIHCTGSWA) is a signal peptide. Position 20 is a pyrrolidone carboxylic acid (Q20). Residues 20 to 44 (QSVLTQPPSVSAAPGQKVTISCSGS) are framework-1. Positions 20-117 (QSVLTQPPSV…CGTWDSSLSA (98 aa)) constitute an Ig-like domain. C41 and C108 are oxidised to a cystine. Residues 45-52 (SSNIGNNY) form a complementarity-determining-1 region. The framework-2 stretch occupies residues 53-69 (VSWYQQLPGTAPKLLIY). A complementarity-determining-2 region spans residues 70–72 (DNN). Residues 73–108 (KRPSGIPDRFSGSKSGTSATLGITGLQTGDEADYYC) are framework-3. A complementarity-determining-3 region spans residues 109 to 117 (GTWDSSLSA).

As to quaternary structure, immunoglobulins are composed of two identical heavy chains and two identical light chains; disulfide-linked.

It localises to the secreted. The protein resides in the cell membrane. In terms of biological role, v region of the variable domain of immunoglobulin light chains that participates in the antigen recognition. Immunoglobulins, also known as antibodies, are membrane-bound or secreted glycoproteins produced by B lymphocytes. In the recognition phase of humoral immunity, the membrane-bound immunoglobulins serve as receptors which, upon binding of a specific antigen, trigger the clonal expansion and differentiation of B lymphocytes into immunoglobulins-secreting plasma cells. Secreted immunoglobulins mediate the effector phase of humoral immunity, which results in the elimination of bound antigens. The antigen binding site is formed by the variable domain of one heavy chain, together with that of its associated light chain. Thus, each immunoglobulin has two antigen binding sites with remarkable affinity for a particular antigen. The variable domains are assembled by a process called V-(D)-J rearrangement and can then be subjected to somatic hypermutations which, after exposure to antigen and selection, allow affinity maturation for a particular antigen. The polypeptide is Immunoglobulin lambda variable 1-51 (Homo sapiens (Human)).